The sequence spans 127 residues: Glycine cleavage system H protein (127 aa).

Positions 22 to 104 (TVRIGITDFA…YDKAWMIVIE (83 aa)) constitute a Lipoyl-binding domain. An N6-lipoyllysine modification is found at K63.

This sequence belongs to the GcvH family. As to quaternary structure, the glycine cleavage system is composed of four proteins: P, T, L and H. It depends on (R)-lipoate as a cofactor.

Functionally, the glycine cleavage system catalyzes the degradation of glycine. The H protein shuttles the methylamine group of glycine from the P protein to the T protein. Is also involved in protein lipoylation via its role as an octanoyl/lipoyl carrier protein intermediate. The sequence is that of Glycine cleavage system H protein from Anoxybacillus flavithermus (strain DSM 21510 / WK1).